A 469-amino-acid polypeptide reads, in one-letter code: 3-isopropylmalate dehydratase large subunit (469 aa).

[4Fe-4S] cluster-binding residues include C350, C410, and C413.

Belongs to the aconitase/IPM isomerase family. LeuC type 1 subfamily. Heterodimer of LeuC and LeuD. [4Fe-4S] cluster serves as cofactor.

It catalyses the reaction (2R,3S)-3-isopropylmalate = (2S)-2-isopropylmalate. The protein operates within amino-acid biosynthesis; L-leucine biosynthesis; L-leucine from 3-methyl-2-oxobutanoate: step 2/4. Catalyzes the isomerization between 2-isopropylmalate and 3-isopropylmalate, via the formation of 2-isopropylmaleate. This is 3-isopropylmalate dehydratase large subunit from Rhizobium etli (strain CIAT 652).